Reading from the N-terminus, the 171-residue chain is UPF0763 protein Hac_0849 (171 aa).

This sequence belongs to the UPF0763 family.

This chain is UPF0763 protein Hac_0849, found in Helicobacter acinonychis (strain Sheeba).